The following is a 548-amino-acid chain: Membrane protein insertase YidC (548 aa).

Residues 6-26 form a helical membrane-spanning segment; sequence NLLVIALLFVSFMIWQAWEQD. The disordered stretch occupies residues 28–56; it reads NPQPQTQQTTQTTTTAAGSAADQGVPASG. A compositionally biased stretch (low complexity) spans 29 to 42; sequence PQPQTQQTTQTTTT. Helical transmembrane passes span 350-370, 424-444, 458-478, and 499-519; these read FVGN…GIMY, FPLI…MGSI, LSAQ…MFFI, and PVIF…YYIV.

The protein belongs to the OXA1/ALB3/YidC family. Type 1 subfamily. Interacts with the Sec translocase complex via SecD. Specifically interacts with transmembrane segments of nascent integral membrane proteins during membrane integration.

It is found in the cell inner membrane. In terms of biological role, required for the insertion and/or proper folding and/or complex formation of integral membrane proteins into the membrane. Involved in integration of membrane proteins that insert both dependently and independently of the Sec translocase complex, as well as at least some lipoproteins. Aids folding of multispanning membrane proteins. The polypeptide is Membrane protein insertase YidC (Salmonella enteritidis PT4 (strain P125109)).